The chain runs to 336 residues: tRNA N6-adenosine threonylcarbamoyltransferase (336 aa).

The Fe cation site is built by histidine 114 and histidine 118. Substrate contacts are provided by residues 136 to 140, aspartate 169, glycine 182, aspartate 186, and asparagine 275; that span reads LVSGG. Aspartate 301 lines the Fe cation pocket.

This sequence belongs to the KAE1 / TsaD family. Fe(2+) serves as cofactor.

Its subcellular location is the cytoplasm. It catalyses the reaction L-threonylcarbamoyladenylate + adenosine(37) in tRNA = N(6)-L-threonylcarbamoyladenosine(37) in tRNA + AMP + H(+). Functionally, required for the formation of a threonylcarbamoyl group on adenosine at position 37 (t(6)A37) in tRNAs that read codons beginning with adenine. Is involved in the transfer of the threonylcarbamoyl moiety of threonylcarbamoyl-AMP (TC-AMP) to the N6 group of A37, together with TsaE and TsaB. TsaD likely plays a direct catalytic role in this reaction. This Streptococcus gordonii (strain Challis / ATCC 35105 / BCRC 15272 / CH1 / DL1 / V288) protein is tRNA N6-adenosine threonylcarbamoyltransferase.